The chain runs to 370 residues: Peptidoglycan glycosyltransferase MrdB (370 aa).

9 helical membrane-spanning segments follow: residues 20–40 (MLLI…SASG), 50–70 (IGQI…PPRV), 75–95 (APYL…FGAI), 136–156 (SLKN…LVAA), 160–180 (LGTS…SGLS), 183–203 (LIGV…FFLM), 263–283 (FIFA…LLAL), 312–332 (LILF…LPVV), and 336–356 (LPLV…FGIV).

This sequence belongs to the SEDS family. MrdB/RodA subfamily.

It localises to the cell inner membrane. The enzyme catalyses [GlcNAc-(1-&gt;4)-Mur2Ac(oyl-L-Ala-gamma-D-Glu-L-Lys-D-Ala-D-Ala)](n)-di-trans,octa-cis-undecaprenyl diphosphate + beta-D-GlcNAc-(1-&gt;4)-Mur2Ac(oyl-L-Ala-gamma-D-Glu-L-Lys-D-Ala-D-Ala)-di-trans,octa-cis-undecaprenyl diphosphate = [GlcNAc-(1-&gt;4)-Mur2Ac(oyl-L-Ala-gamma-D-Glu-L-Lys-D-Ala-D-Ala)](n+1)-di-trans,octa-cis-undecaprenyl diphosphate + di-trans,octa-cis-undecaprenyl diphosphate + H(+). It participates in cell wall biogenesis; peptidoglycan biosynthesis. Its function is as follows. Peptidoglycan polymerase that is essential for cell wall elongation. The polypeptide is Peptidoglycan glycosyltransferase MrdB (Escherichia coli O157:H7).